Here is a 518-residue protein sequence, read N- to C-terminus: Prosaposin (518 aa).

A signal peptide spans 1–17; it reads MARRLLTLLGLLAAAVA. The propeptide occupies 18–60; the sequence is SPVLWQKDCAKGPEVWCQSLRTASQCGAVKHCQQNVWSKPAVN. A Saposin A-type 1 domain is found at 19–59; sequence PVLWQKDCAKGPEVWCQSLRTASQCGAVKHCQQNVWSKPAV. Saposin B-type domains follow at residues 60 to 143, 193 to 277, 307 to 388, and 399 to 480; these read NSIP…QSLQ, TEDV…PSVK, TFSV…AANK, and AGGF…GAAK. Cystine bridges form between Cys64–Cys139, Cys67–Cys133, and Cys95–Cys107. N-linked (GlcNAc...) asparagine glycosylation is present at Asn81. A propeptide spanning residues 144 to 193 is cleaved from the precursor; the sequence is KHLAAMKLQKQLQSNKIPELDFSELTSPFMANVPLLLYPQDKPKQKSKAT. 3 disulfides stabilise this stretch: Cys197–Cys273, Cys200–Cys267, and Cys229–Cys240. N-linked (GlcNAc...) asparagine glycosylation occurs at Asn214. The propeptide occupies 277 to 306; the sequence is KSVPLQTLVPAQVVHEVKMETVEKATVQEK. Cystine bridges form between Cys311-Cys384, Cys314-Cys378, and Cys342-Cys353. Asn328 carries N-linked (GlcNAc...) asparagine glycosylation. Residues 388 to 398 constitute a propeptide that is removed on maturation; the sequence is KPPQQPVVVKP. 3 cysteine pairs are disulfide-bonded: Cys403/Cys476, Cys406/Cys470, and Cys434/Cys445. Asn420 carries an N-linked (GlcNAc...) asparagine glycan. The propeptide occupies 480-518; it reads KKPLLGEDACVWGPGYWCKNMETAAQCNAVDHCRRHVWN. A Saposin A-type 2 domain is found at 482–518; that stretch reads PLLGEDACVWGPGYWCKNMETAAQCNAVDHCRRHVWN.

In terms of assembly, saposin-B is a homodimer. This precursor is proteolytically processed to 4 small peptides, which are similar to each other and are sphingolipid hydrolase activator proteins.

It is found in the lysosome. The protein resides in the secreted. In terms of biological role, the lysosomal degradation of sphingolipids takes place by the sequential action of specific hydrolases. Some of these enzymes require specific low-molecular mass, non-enzymatic proteins: the sphingolipids activator proteins (coproteins). Its function is as follows. Saposin-A and saposin-C stimulate the hydrolysis of glucosylceramide by beta-glucosylceramidase (EC 3.2.1.45) and galactosylceramide by beta-galactosylceramidase (EC 3.2.1.46). Saposin-C apparently acts by combining with the enzyme and acidic lipid to form an activated complex, rather than by solubilizing the substrate. Functionally, saposin-B stimulates the hydrolysis of galacto-cerebroside sulfate by arylsulfatase A (EC 3.1.6.8), GM1 gangliosides by beta-galactosidase (EC 3.2.1.23) and globotriaosylceramide by alpha-galactosidase A (EC 3.2.1.22). Saposin-B forms a solubilizing complex with the substrates of the sphingolipid hydrolases. Saposin-D is a specific sphingomyelin phosphodiesterase activator (EC 3.1.4.12). The chain is Prosaposin (PSAP) from Gallus gallus (Chicken).